The sequence spans 207 residues: Small ribosomal subunit protein uS4 (207 aa).

Residues 22–54 (KSARRSISDKSKFESKPGQHGRTSGSRTSDFGL) are disordered. A compositionally biased stretch (basic and acidic residues) spans 27 to 38 (SISDKSKFESKP). A compositionally biased stretch (polar residues) spans 42–52 (GRTSGSRTSDF). The S4 RNA-binding domain maps to 97 to 157 (SRLDNVVYRM…EKSKKQLRII (61 aa)).

This sequence belongs to the universal ribosomal protein uS4 family. In terms of assembly, part of the 30S ribosomal subunit. Contacts protein S5. The interaction surface between S4 and S5 is involved in control of translational fidelity.

One of the primary rRNA binding proteins, it binds directly to 16S rRNA where it nucleates assembly of the body of the 30S subunit. Functionally, with S5 and S12 plays an important role in translational accuracy. The sequence is that of Small ribosomal subunit protein uS4 from Leptothrix cholodnii (strain ATCC 51168 / LMG 8142 / SP-6) (Leptothrix discophora (strain SP-6)).